We begin with the raw amino-acid sequence, 870 residues long: Dynamin-2 (870 aa).

Positions 28–294 constitute a Dynamin-type G domain; the sequence is HLDLPQIAVV…LTNHIRESLP (267 aa). The G1 motif stretch occupies residues 38–45; the sequence is GGQSAGKS. GDP-binding residues include Ser41, Gly43, Lys44, Ser45, Ser46, Arg59, and Gly60. A G2 motif region spans residues 64–66; sequence VTR. Residues 136-139 form a G3 motif region; that stretch reads DLPG. The tract at residues 205–208 is G4 motif; sequence TKLD. GDP-binding residues include Lys206, Asp208, and Asp211. Residue Tyr231 is modified to Phosphotyrosine. The interval 235–238 is G5 motif; it reads VNRS. Residues Asn236, Arg237, and Gln239 each coordinate GDP. Lys299 carries the N6-acetyllysine modification. One can recognise a PH domain in the interval 519 to 625; the sequence is LVIRRGWLTI…WKASFLRAGV (107 aa). The residue at position 597 (Tyr597) is a Phosphotyrosine. Residue Lys598 is modified to N6-acetyllysine. Residues 653–744 enclose the GED domain; sequence VETIRNLVDS…IIGDISTSTV (92 aa). The interval 741-870 is disordered; that stretch reads TSTVSTPVPP…IRPAEPSLLD (130 aa). Thr755 is subject to Phosphothreonine. The segment covering 756–767 has biased composition (polar residues); that stretch reads WLQNTSSHSPTP. Ser764 bears the Phosphoserine; by CDK1 mark. Pro residues predominate over residues 826–846; the sequence is SAPPQIPSRPARIPPGIPPGV. Over residues 847–864 the composition is skewed to low complexity; it reads PSRRAPAAPSRPTIIRPA.

This sequence belongs to the TRAFAC class dynamin-like GTPase superfamily. Dynamin/Fzo/YdjA family. Oligomerizes into a helical polymer that self-assembles around the vesicle membrane, when associated to the menbrane through lipid binding. Interacts with SHANK1 and SHANK2. Interacts with SNX9. Interacts (via C-terminal proline-rich domain (PRD)) with SNX18 (via SH3 domain); this interaction regulates ATG9A and ATG16L1 trafficking from recycling endosomes to sites of autophagosome formation. Interacts with SNX33 (via SH3 domain). Interacts with PSTPIP1 (via SH3 domain). Interacts with CTNND2. Interacts (via C-terminal proline-rich domain (PRD)) with BIN1 (via SH3 domain); this interaction allows the recruitment of DNM2 to the membrane tubules and inhibits self-assembly-stimulated GTPase activity on the membrane. Interacts with GABARAP, GABARAPL1 and GABARAPL2. Interacts with MAP1LC3B (the lipidate and non-lipidated LC3 form); this interaction mediates recycling endosome scission leading to autophagosome release. Interacts with ITSN1. Interacts with MYOF. May interact with PIK3C3. May be a component of a complex composed of RAB5A (in GDP-bound form), DYN2 and PIK3C3. Interacts with SDC4; this interaction is markedly enhanced at focal ahesion site upon induction of focal adhesions and stress-fiber formation. Interacts with ACTN1. Interacts with CTTN; this interaction stimulates the intrinsic GTPase activity of DNM2 and stabilizes the association of DNM2 and actin filaments; in addition this interaction is stimulated by ligand binding to the receptor, leading to the recruitment of the DNM2-CTTN complex to the sequestered receptor-ligand complex to its internalization. Interacts with NOSTRIN (via SH3 domain); this interaction allows the recruitment of NOS3 to dynamin-positive structures. Interacts (via C-terminal proline-rich domain (PRD)) with SH3BP4 (via SH3 domain); this interaction controls the GTPase activity and is prevented by EGFR-induced tyrosine phosphorylation of either DNM2 or SH3BP4. Interacts with MYO1E (via SH3 domain). Interacts with TUBG1; this interaction may participate in centrosome cohesion. In terms of processing, phosphorylation at Ser-848 by GSK3-alpha relieves the inhibition of BIN1 and promotes endocytosis. Phosphorylation at Ser-764 by CDK1 is greatly increased upon mitotic entry. It regulates cytokinesis downstream of calcineurin, and does not affect clathrin-mediated endocytosis. Dephosphorylated by calcineurin/PP2 during cytokinesis in a Ca(2+)- and calmodulin-dependent manner. Phosphorylated on tyrosine residues by EGFR. Phosphorylated on tyrosine residues after activation of SRC. In terms of tissue distribution, ubiquitously expressed. Brain expression is restricted to glial cells and fibroblasts. Highest levels in the testis.

It localises to the cytoplasm. It is found in the cytoskeleton. The protein resides in the cytoplasmic vesicle. Its subcellular location is the clathrin-coated vesicle. The protein localises to the cell projection. It localises to the uropodium. It is found in the endosome. The protein resides in the microtubule organizing center. Its subcellular location is the centrosome. The protein localises to the centriole. It localises to the recycling endosome. It is found in the phagocytic cup. The protein resides in the phagosome membrane. Its subcellular location is the podosome. The protein localises to the cell junction. It localises to the postsynaptic density. It is found in the synapse. The protein resides in the synaptosome. Its subcellular location is the midbody. The protein localises to the membrane. It localises to the clathrin-coated pit. It is found in the cell membrane. It carries out the reaction GTP + H2O = GDP + phosphate + H(+). In terms of biological role, catalyzes the hydrolysis of GTP and utilizes this energy to mediate vesicle scission at plasma membrane during endocytosis and filament remodeling at many actin structures during organization of the actin cytoskeleton. Plays an important role in vesicular trafficking processes, namely clathrin-mediated endocytosis (CME), exocytic and clathrin-coated vesicle from the trans-Golgi network, and PDGF stimulated macropinocytosis. During vesicular trafficking process, associates to the membrane, through lipid binding, and self-assembles into ring-like structure through oligomerization to form a helical polymer around the vesicle membrane and leading to vesicle scission. Plays a role in organization of the actin cytoskeleton by mediating arrangement of stress fibers and actin bundles in podocytes. During organization of the actin cytoskeleton, self-assembles into ring-like structure that directly bundles actin filaments to form typical membrane tubules decorated with dynamin spiral polymers. Self-assembly increases GTPase activity and the GTP hydrolysis causes the rapid depolymerization of dynamin spiral polymers, and results in dispersion of actin bundles. Remodels, through its interaction with CTTN, bundled actin filaments in a GTPase-dependent manner and plays a role in orchestrating the global actomyosin cytoskeleton. The interaction with CTTN stabilizes the interaction of DNM2 and actin filaments and stimulates the intrinsic GTPase activity that results in actin filament-barbed ends and increases the sensitivity of filaments in bundles to the actin depolymerizing factor, CFL1. Plays a role in the autophagy process, by participating in the formation of ATG9A vesicles destined for the autophagosomes through its interaction with SNX18, by mediating recycling endosome scission leading to autophagosome release through MAP1LC3B interaction and by regulating maturation of apoptotic cell corpse-containing phagosomes by recruiting PIK3C3 to the phagosome membrane. Also plays a role in cytokinesis. May participate in centrosome cohesion through its interaction with TUBG1. Plays a role in the regulation of neuron morphology, axon growth and formation of neuronal growth cones. Involved in membrane tubulation. The protein is Dynamin-2 of Rattus norvegicus (Rat).